A 388-amino-acid polypeptide reads, in one-letter code: Succinate--CoA ligase [ADP-forming] subunit beta (388 aa).

One can recognise an ATP-grasp domain in the interval Lys-9 to His-244. ATP-binding positions include Lys-46, Gly-53–Gly-55, Glu-99, Thr-102, and Glu-107. Asn-199 and Asp-213 together coordinate Mg(2+). Residues Asn-264 and Gly-321–Val-323 contribute to the substrate site.

This sequence belongs to the succinate/malate CoA ligase beta subunit family. Heterotetramer of two alpha and two beta subunits. Mg(2+) serves as cofactor.

The enzyme catalyses succinate + ATP + CoA = succinyl-CoA + ADP + phosphate. It carries out the reaction GTP + succinate + CoA = succinyl-CoA + GDP + phosphate. Its pathway is carbohydrate metabolism; tricarboxylic acid cycle; succinate from succinyl-CoA (ligase route): step 1/1. Succinyl-CoA synthetase functions in the citric acid cycle (TCA), coupling the hydrolysis of succinyl-CoA to the synthesis of either ATP or GTP and thus represents the only step of substrate-level phosphorylation in the TCA. The beta subunit provides nucleotide specificity of the enzyme and binds the substrate succinate, while the binding sites for coenzyme A and phosphate are found in the alpha subunit. This chain is Succinate--CoA ligase [ADP-forming] subunit beta, found in Stutzerimonas stutzeri (strain A1501) (Pseudomonas stutzeri).